Here is a 334-residue protein sequence, read N- to C-terminus: RNA polymerase sigma factor RpoS (334 aa).

A disordered region spans residues 21-50; that stretch reads PGIMLDESSADEQPSPRATPKATTSFSSKQ. Positions 61 to 94 are sigma-70 factor domain-1; that stretch reads DATQLYLNEIGFSPLLTPEEEVHFARLAQKGDPA. The interval 99-169 is sigma-70 factor domain-2; it reads MIESNLRLVV…ERAIMNQTRT (71 aa). An Interaction with polymerase core subunit RpoC motif is present at residues 123–126; the sequence is DLIE. Positions 179-254 are sigma-70 factor domain-3; sequence ELNVYLRAAR…DDRPTDPCEL (76 aa). The segment at 267–320 is sigma-70 factor domain-4; the sequence is WLTELTDKQREVVIRRFGLRGHESSTLEEVGQEIGLTRERVRQIQVEALKRLRE. Residues 293 to 312 constitute a DNA-binding region (H-T-H motif); sequence LEEVGQEIGLTRERVRQIQV.

Belongs to the sigma-70 factor family. RpoS subfamily. Interacts with the RNA polymerase core enzyme.

The protein resides in the cytoplasm. Its function is as follows. Sigma factors are initiation factors that promote the attachment of RNA polymerase to specific initiation sites and are then released. This sigma factor is the master transcriptional regulator of the stationary phase and the general stress response. This is RNA polymerase sigma factor RpoS from Pseudomonas aeruginosa (strain ATCC 15692 / DSM 22644 / CIP 104116 / JCM 14847 / LMG 12228 / 1C / PRS 101 / PAO1).